The chain runs to 375 residues: MKEFAYSEPCLDKEDKKAVLEVLNSKQLTQGKRSLLFEEALCEFLGVKHALVFNSATSALLTLYRNFSEFSADRNEIITTPISFVATANMLLESGYTPVFAGIKNDGNIDELALEKLINERTKAIVSVDYAGKSVEVESVQKLCKKHSLSFLSDSSHALGSEYQNKKVGGFALASVFSFHAIKPITTAEGGAVVTNDSELHEKMKLFRSHGMLKKDFFEGEVKSIGHNFRLNEIQSALGLSQLKKAPFLMQKREEAALTYDRIFKDNPYFTPLHPLLKDKSSNHLYPILMHQKFFTCKKLILESLHKRGILAQVHYKPIYQYQLYQQLFNTAPLKSAEDFYHAEISLPCHANLNLESVQNIAHSVLKTFESFKIE.

Substrate-binding positions include Tyr-6, Lys-26–Thr-29, Ala-56, and Ser-178. N6-(pyridoxal phosphate)lysine is present on Lys-183. Substrate-binding positions include Asn-228 and Gln-313–Tyr-316.

This sequence belongs to the DegT/DnrJ/EryC1 family.

The enzyme catalyses UDP-4-amino-4,6-dideoxy-N-acetyl-beta-L-altrosamine + 2-oxoglutarate = UDP-2-acetamido-2,6-dideoxy-beta-L-arabino-hex-4-ulose + L-glutamate. Its function is as follows. Catalyzes the second step in the biosynthesis of pseudaminic acid, a sialic-acid-like sugar that is used to modify flagellin. Uses UDP-2-acetamido-2,6-dideoxy-beta-L-arabino-4-hexulose as substrate producing UDP-4-amino-4,6-dideoxy-beta-L-AltNAc. This chain is UDP-4-amino-4,6-dideoxy-N-acetyl-beta-L-altrosamine transaminase (pseC), found in Helicobacter pylori (strain ATCC 700392 / 26695) (Campylobacter pylori).